The primary structure comprises 222 residues: Phosphoenolpyruvate guanylyltransferase (222 aa).

The phosphoenolpyruvate site is built by Thr-134, Gly-150, and Ser-153.

This sequence belongs to the CofC family.

It carries out the reaction phosphoenolpyruvate + GTP + H(+) = enolpyruvoyl-2-diphospho-5'-guanosine + diphosphate. It participates in cofactor biosynthesis; coenzyme F420 biosynthesis. Functionally, guanylyltransferase that catalyzes the activation of phosphoenolpyruvate (PEP) as enolpyruvoyl-2-diphospho-5'-guanosine, via the condensation of PEP with GTP. It is involved in the biosynthesis of coenzyme F420, a hydride carrier cofactor. The chain is Phosphoenolpyruvate guanylyltransferase from Roseiflexus sp. (strain RS-1).